The following is a 330-amino-acid chain: MKTSIRYALLAAALTAATPALADITVYNGQHKEAAQAVADAFTRATGIKVKLNSAKGDQLAGQIKEEGSRSPADVFYSEQIPALATLSAANLLEPLPASTINETRGKGVPVAAKKDWVALSGRSRVVVYDTRKLSEKDLEKSVLNYATPKWKNRIGYVPTSGAFLEQIVAIVKLKGEAAALKWLKGLKEYGKPYAKNSVALQAVENGEIDAALINNYYWHAFAREKGVQNVHTRLNFVRHRDPGALVTYSGAVLKSSQNKDEAKKFVAFLAGKEGQRALTAVRAEYPLNPHVVSTFNLEPIAKLEAPQVSATTVSEKEHATRLLEQAGMK.

An N-terminal signal peptide occupies residues 1–22; sequence MKTSIRYALLAAALTAATPALA. Fe cation contacts are provided by His31, Glu79, Tyr217, and Tyr218.

It belongs to the bacterial solute-binding protein 1 family.

The protein resides in the periplasm. This protein may be a central component in the iron-acquisition system. The sequence is that of Major ferric iron-binding protein (fbp) from Neisseria gonorrhoeae.